A 38-amino-acid chain; its full sequence is MKVRASVKKMCEKCRVIRRHGRVMVICTATQKHKQRQG.

The protein belongs to the bacterial ribosomal protein bL36 family.

This is Large ribosomal subunit protein bL36 from Prochlorococcus marinus (strain SARG / CCMP1375 / SS120).